The primary structure comprises 449 residues: Bifunctional F420 biosynthesis protein FbiB (449 aa).

A coenzyme F420:L-glutamate ligase region spans residues 1-245 (MSPAGEHGTA…PGTEDLFWLG (245 aa)). Residues 21–24 (LPEF), serine 51, and lysine 56 contribute to the GTP site. A divalent metal cation is bound at residue aspartate 110. GTP is bound at residue asparagine 113. Residues aspartate 151 and threonine 152 each contribute to the a divalent metal cation site. Residues 246 to 449 (TAEAIELGRR…ADPGDLLIRK (204 aa)) are dehydro-coenzyme F420-0 reductase. FMN-binding positions include 261 to 265 (RRSVR) and alanine 289. Residue aspartate 321 coordinates coenzyme F420-(gamma-Glu)n. Residues glycine 400 and arginine 437 each coordinate FMN.

This sequence in the N-terminal section; belongs to the CofE family. The cofactor is Mg(2+). Mn(2+) serves as cofactor. It depends on K(+) as a cofactor.

It catalyses the reaction oxidized coenzyme F420-0 + GTP + L-glutamate = oxidized coenzyme F420-1 + GDP + phosphate + H(+). It carries out the reaction oxidized coenzyme F420-1 + GTP + L-glutamate = oxidized coenzyme F420-2 + GDP + phosphate + H(+). The catalysed reaction is oxidized coenzyme F420-(gamma-L-Glu)(n) + GTP + L-glutamate = oxidized coenzyme F420-(gamma-L-Glu)(n+1) + GDP + phosphate + H(+). The enzyme catalyses oxidized coenzyme F420-0 + FMN + H(+) = dehydro coenzyme F420-0 + FMNH2. It participates in cofactor biosynthesis; coenzyme F420 biosynthesis. Bifunctional enzyme that catalyzes the GTP-dependent successive addition of multiple gamma-linked L-glutamates to the L-lactyl phosphodiester of 7,8-didemethyl-8-hydroxy-5-deazariboflavin (F420-0) to form polyglutamated F420 derivatives, and the FMNH2-dependent reduction of dehydro-F420-0 to form F420-0. This chain is Bifunctional F420 biosynthesis protein FbiB, found in Mycobacterium avium (strain 104).